The primary structure comprises 60 residues: Cytotoxin 1 (60 aa).

4 cysteine pairs are disulfide-bonded: cysteine 3–cysteine 21, cysteine 14–cysteine 38, cysteine 42–cysteine 53, and cysteine 54–cysteine 59.

The protein belongs to the three-finger toxin family. Short-chain subfamily. Type IA cytotoxin sub-subfamily. As to quaternary structure, monomer in solution; Homodimer and oligomer in the presence of negatively charged lipids forming a pore with a size ranging between 20 and 30 Angstroms. Expressed by the venom gland.

The protein resides in the secreted. It localises to the target cell membrane. Its function is as follows. Shows cytolytic activity on many different cells by forming pore in lipid membranes. In vivo, increases heart rate or kills the animal by cardiac arrest. In addition, it binds to heparin with high affinity, interacts with Kv channel-interacting protein 1 (KCNIP1) in a calcium-independent manner, and binds to integrin alpha-V/beta-3 (ITGAV/ITGB3) with moderate affinity. The chain is Cytotoxin 1 from Naja melanoleuca (Forest cobra).